The sequence spans 384 residues: MNALVNLLDLDADALTAYCGELGEKPFRARQLQRWIHHYGASRFDAMSDLAKSLREKLATRAEIRAPAAITDHLSADGTRKWLLDVGQGNAVETVYIPEETRGTLCVSSQAGCAVNCRFCSTGKQGFSRNLSTGEIIGQLWMAEFAMREQLGRGPKDDRVISNVVMMGMGEPLLNYDAVVPAMRLMLDDNAYGLSRRRVTLSTSGVVPMMDRLSKDLPVALAVSLHASNDALRDVLVPLNKKYPLAELMAACRRYLEFAPRDFITFEYCMLDGVNDGVEHARELLKLVADVPCKFNLIPFNPFPESGLKRSNNDQIRRFAQVLMDAGIVTTIRKTRGDDIDAACGQLAGEVKDRTRLVERGKFGKITPLVPVAASGQPREVRPA.

Residue glutamate 93 is the Proton acceptor of the active site. A Radical SAM core domain is found at 99 to 339; the sequence is EETRGTLCVS…TTIRKTRGDD (241 aa). Residues cysteine 106 and cysteine 344 are joined by a disulfide bond. The [4Fe-4S] cluster site is built by cysteine 113, cysteine 117, and cysteine 120. Residues 170–171, serine 202, 224–226, and asparagine 301 each bind S-adenosyl-L-methionine; these read GE and SLH. Cysteine 344 acts as the S-methylcysteine intermediate in catalysis.

The protein belongs to the radical SAM superfamily. RlmN family. [4Fe-4S] cluster serves as cofactor.

Its subcellular location is the cytoplasm. It carries out the reaction adenosine(2503) in 23S rRNA + 2 reduced [2Fe-2S]-[ferredoxin] + 2 S-adenosyl-L-methionine = 2-methyladenosine(2503) in 23S rRNA + 5'-deoxyadenosine + L-methionine + 2 oxidized [2Fe-2S]-[ferredoxin] + S-adenosyl-L-homocysteine. It catalyses the reaction adenosine(37) in tRNA + 2 reduced [2Fe-2S]-[ferredoxin] + 2 S-adenosyl-L-methionine = 2-methyladenosine(37) in tRNA + 5'-deoxyadenosine + L-methionine + 2 oxidized [2Fe-2S]-[ferredoxin] + S-adenosyl-L-homocysteine. Specifically methylates position 2 of adenine 2503 in 23S rRNA and position 2 of adenine 37 in tRNAs. m2A2503 modification seems to play a crucial role in the proofreading step occurring at the peptidyl transferase center and thus would serve to optimize ribosomal fidelity. The protein is Dual-specificity RNA methyltransferase RlmN of Cupriavidus necator (strain ATCC 17699 / DSM 428 / KCTC 22496 / NCIMB 10442 / H16 / Stanier 337) (Ralstonia eutropha).